Consider the following 172-residue polypeptide: Signal peptidase complex catalytic subunit SEC11 (172 aa).

Topologically, residues 1-14 (MLSSLQNPRQAAAQ) are cytoplasmic. The chain crosses the membrane as a helical; Signal-anchor for type II membrane protein span at residues 15–35 (LMNFGLILSTAFMMWKGLSVI). Over 36 to 172 (TDSPSPIVVV…MGLVVVLQRE (137 aa)) the chain is Lumenal. Active-site charge relay system residues include S49, H90, and D115. Positions 158 to 169 (VMLGIMGLVVVL) are C-terminal short (CTS) helix.

This sequence belongs to the peptidase S26B family. Component of the signal peptidase complex (SPC) composed of a catalytic subunit SEC11 and three accessory subunits SPC1, SPC2 and SPC3. The complex induces a local thinning of the ER membrane which is used to measure the length of the signal peptide (SP) h-region of protein substrates. This ensures the selectivity of the complex towards h-regions shorter than 18-20 amino acids. SPC associates with the translocon complex.

The protein localises to the endoplasmic reticulum membrane. It catalyses the reaction Cleavage of hydrophobic, N-terminal signal or leader sequences from secreted and periplasmic proteins.. Catalytic component of the signal peptidase complex (SPC) which catalyzes the cleavage of N-terminal signal sequences from nascent proteins as they are translocated into the lumen of the endoplasmic reticulum. Specifically cleaves N-terminal signal peptides that contain a hydrophobic alpha-helix (h-region) shorter than 18-20 amino acids. The sequence is that of Signal peptidase complex catalytic subunit SEC11 (SEC11) from Chaetomium globosum (strain ATCC 6205 / CBS 148.51 / DSM 1962 / NBRC 6347 / NRRL 1970) (Soil fungus).